The chain runs to 557 residues: Carbamoyl phosphate synthase large chain, N-terminal section (557 aa).

Positions 1 to 402 (MPKRTDIKKI…ALLKAVRSLE (402 aa)) are carboxyphosphate synthetic domain. 12 residues coordinate ATP: Arg129, Arg169, Gly175, Gly176, Lys208, Leu210, Glu215, Gly241, Val242, His243, Gln285, and Glu299. The ATP-grasp domain occupies 133–328 (KETMESIGLK…IAKVAAKLAV (196 aa)). Mg(2+)-binding residues include Gln285, Glu299, and Asn301. Positions 285, 299, and 301 each coordinate Mn(2+). Residues 403–553 (LDRYGLAFPK…PYYTVDGQEI (151 aa)) are oligomerization domain.

The protein belongs to the CarB family. As to quaternary structure, composed of two chains; the small (or glutamine) chain promotes the hydrolysis of glutamine to ammonia, which is used by the large (or ammonia) chain to synthesize carbamoyl phosphate. Tetramer of heterodimers (alpha,beta)4. Requires Mg(2+) as cofactor. It depends on Mn(2+) as a cofactor.

It carries out the reaction hydrogencarbonate + L-glutamine + 2 ATP + H2O = carbamoyl phosphate + L-glutamate + 2 ADP + phosphate + 2 H(+). The catalysed reaction is hydrogencarbonate + NH4(+) + 2 ATP = carbamoyl phosphate + 2 ADP + phosphate + 2 H(+). Its pathway is amino-acid biosynthesis; L-arginine biosynthesis; carbamoyl phosphate from bicarbonate: step 1/1. The protein operates within pyrimidine metabolism; UMP biosynthesis via de novo pathway; (S)-dihydroorotate from bicarbonate: step 1/3. Large subunit of the glutamine-dependent carbamoyl phosphate synthetase (CPSase). CPSase catalyzes the formation of carbamoyl phosphate from the ammonia moiety of glutamine, carbonate, and phosphate donated by ATP, constituting the first step of 2 biosynthetic pathways, one leading to arginine and/or urea and the other to pyrimidine nucleotides. The large subunit (synthetase) binds the substrates ammonia (free or transferred from glutamine from the small subunit), hydrogencarbonate and ATP and carries out an ATP-coupled ligase reaction, activating hydrogencarbonate by forming carboxy phosphate which reacts with ammonia to form carbamoyl phosphate. This is Carbamoyl phosphate synthase large chain, N-terminal section (carB1) from Aquifex aeolicus (strain VF5).